Consider the following 497-residue polypeptide: Homeotic protein empty spiracles (497 aa).

Disordered regions lie at residues 34–117 (NDVS…HLSP), 161–262 (SPLQ…MMMP), and 441–497 (NRRT…DASH). Positions 35–50 (DVSTAGGNSTPDLSGP) are enriched in polar residues. Over residues 51 to 68 (QSPPPGERNVPGSPPQTP) the composition is skewed to pro residues. Over residues 96–117 (PHAQQQQQQHLQAPHPHPHLSP) the composition is skewed to low complexity. The span at 161-176 (SPLQTRLSPETEQPQM) shows a compositional bias: polar residues. Low complexity-rich tracts occupy residues 208 to 239 (PKSV…QQQQ) and 248 to 262 (PAMM…MMMP). Positions 391–450 (PKRIRTAFSPSQLLKLEHAFESNQYVVGAERKALAQNLNLSETQVKVWFQNRRTKHKRMQ) form a DNA-binding region, homeobox. Positions 470–497 (GDEDDDELIDMEMDECPSDEEHELDASH) are enriched in acidic residues.

The protein belongs to the EMX homeobox family.

The protein localises to the nucleus. Its function is as follows. Acts as a homeotic selector gene controlling antennal and mandibular segment identity. In Drosophila melanogaster (Fruit fly), this protein is Homeotic protein empty spiracles (ems).